A 92-amino-acid polypeptide reads, in one-letter code: Auxin-responsive protein SAUR28 (92 aa).

It belongs to the ARG7 family. As to expression, higher expression in thermo-responsive cultivars (e.g. cv. Alst-1, cv. Ang-0 and cv. Com-0) than in low thermo-responsive cultivars (e.g. cv. Dja-1, cv. El-0 and cv. Kon).

Its subcellular location is the cell membrane. Functionally, functions as a positive effector of cell expansion through modulation of auxin transport. Involved in thermo-responsiveness of plant architecture. Enhances plasma membrane H(+)-ATPase. In Arabidopsis thaliana (Mouse-ear cress), this protein is Auxin-responsive protein SAUR28.